The following is a 427-amino-acid chain: Gamma-glutamyl phosphate reductase (427 aa).

Belongs to the gamma-glutamyl phosphate reductase family.

It localises to the cytoplasm. The enzyme catalyses L-glutamate 5-semialdehyde + phosphate + NADP(+) = L-glutamyl 5-phosphate + NADPH + H(+). The protein operates within amino-acid biosynthesis; L-proline biosynthesis; L-glutamate 5-semialdehyde from L-glutamate: step 2/2. In terms of biological role, catalyzes the NADPH-dependent reduction of L-glutamate 5-phosphate into L-glutamate 5-semialdehyde and phosphate. The product spontaneously undergoes cyclization to form 1-pyrroline-5-carboxylate. The sequence is that of Gamma-glutamyl phosphate reductase from Brucella anthropi (strain ATCC 49188 / DSM 6882 / CCUG 24695 / JCM 21032 / LMG 3331 / NBRC 15819 / NCTC 12168 / Alc 37) (Ochrobactrum anthropi).